The sequence spans 747 residues: Nucleolar complex-associated protein 3 (747 aa).

Positions 1-11 (MAARKNQKSPK) are enriched in basic residues. Positions 1 to 142 (MAARKNQKSP…EDEQDYELRP (142 aa)) are disordered. The span at 74–86 (ENPSSLKYLSSIN) shows a compositional bias: polar residues. A compositionally biased stretch (basic and acidic residues) spans 89 to 109 (DLGKKVEKGPRPDIYDLKKSQ). A Phosphoserine modification is found at S120. The stretch at 214–234 (KQQIKNDKEALGIQAQQLLEE) forms a coiled coil.

This sequence belongs to the CBF/MAK21 family.

The protein localises to the nucleus. The protein resides in the nucleolus. Its function is as follows. May be required for synthesis of 60S ribosomal subunits and the transport of pre-ribosomes from the nucleoplasm to the cytoplasm. This chain is Nucleolar complex-associated protein 3 (noc3), found in Schizosaccharomyces pombe (strain 972 / ATCC 24843) (Fission yeast).